The chain runs to 361 residues: Holliday junction branch migration complex subunit RuvB (361 aa).

2 stretches are compositionally biased toward basic and acidic residues: residues 1–13 (MSDVERTEFKLPE) and 33–43 (QGEHDIERSLR). The segment at 1–43 (MSDVERTEFKLPEGMDLSSPPQRNQDVDAAEQQGEHDIERSLR) is disordered. Residues 2–203 (SDVERTEFKL…FGFTAQMEYY (202 aa)) form a large ATPase domain (RuvB-L) region. ATP contacts are provided by residues L42, R43, G84, K87, T88, T89, 150-152 (EDF), R193, Y203, and R240. T88 contacts Mg(2+). A small ATPAse domain (RuvB-S) region spans residues 204–274 (DTEDLTRVIS…AAQAALRVFD (71 aa)). The interval 277 to 361 (ERGLDRLDRA…PEGAIGGTLF (85 aa)) is head domain (RuvB-H). DNA-binding residues include R332 and R337.

The protein belongs to the RuvB family. In terms of assembly, homohexamer. Forms an RuvA(8)-RuvB(12)-Holliday junction (HJ) complex. HJ DNA is sandwiched between 2 RuvA tetramers; dsDNA enters through RuvA and exits via RuvB. An RuvB hexamer assembles on each DNA strand where it exits the tetramer. Each RuvB hexamer is contacted by two RuvA subunits (via domain III) on 2 adjacent RuvB subunits; this complex drives branch migration. In the full resolvosome a probable DNA-RuvA(4)-RuvB(12)-RuvC(2) complex forms which resolves the HJ.

It is found in the cytoplasm. It carries out the reaction ATP + H2O = ADP + phosphate + H(+). The RuvA-RuvB-RuvC complex processes Holliday junction (HJ) DNA during genetic recombination and DNA repair, while the RuvA-RuvB complex plays an important role in the rescue of blocked DNA replication forks via replication fork reversal (RFR). RuvA specifically binds to HJ cruciform DNA, conferring on it an open structure. The RuvB hexamer acts as an ATP-dependent pump, pulling dsDNA into and through the RuvAB complex. RuvB forms 2 homohexamers on either side of HJ DNA bound by 1 or 2 RuvA tetramers; 4 subunits per hexamer contact DNA at a time. Coordinated motions by a converter formed by DNA-disengaged RuvB subunits stimulates ATP hydrolysis and nucleotide exchange. Immobilization of the converter enables RuvB to convert the ATP-contained energy into a lever motion, pulling 2 nucleotides of DNA out of the RuvA tetramer per ATP hydrolyzed, thus driving DNA branch migration. The RuvB motors rotate together with the DNA substrate, which together with the progressing nucleotide cycle form the mechanistic basis for DNA recombination by continuous HJ branch migration. Branch migration allows RuvC to scan DNA until it finds its consensus sequence, where it cleaves and resolves cruciform DNA. This Corynebacterium aurimucosum (strain ATCC 700975 / DSM 44827 / CIP 107346 / CN-1) (Corynebacterium nigricans) protein is Holliday junction branch migration complex subunit RuvB.